Consider the following 330-residue polypeptide: MTGDDADETHENVVPGSDEDLDTPDVRGYDFSGEFDFFELLDSYATTGFQASHLADAVDITREMREDDATIYLTLTSNIVSSGLREVVAHLVRENYVDVIITTSGSLTEDIIKTAKPFKMGEWDVDEAALREEGINRLGNIFVPSDRYVWLEEYLYDFFEEFFADQKVRTPTAFARELGATLDDEDSILKNAADNDIPVFCPALTDAEIGNFLYYYRQGYDSEVGIEILDDYDALIEEGLLADTTGLICVGAGVPKHHAIMTNLFRGGADYAVYISTGMEGDGSLSGAPPEEAVSWGKIKDEDAEPNYALIEAEATLVFPLLVAGAFENP.

The interval 1 to 25 (MTGDDADETHENVVPGSDEDLDTPD) is disordered. The active-site Nucleophile is the Lys298.

The protein belongs to the deoxyhypusine synthase family. NAD(+) is required as a cofactor.

It carries out the reaction [eIF5A protein]-L-lysine + spermidine = [eIF5A protein]-deoxyhypusine + propane-1,3-diamine. It participates in protein modification; eIF5A hypusination. Catalyzes the NAD-dependent oxidative cleavage of spermidine and the subsequent transfer of the butylamine moiety of spermidine to the epsilon-amino group of a specific lysine residue of the eIF-5A precursor protein to form the intermediate deoxyhypusine residue. In Halobacterium salinarum (strain ATCC 29341 / DSM 671 / R1), this protein is Probable deoxyhypusine synthase.